We begin with the raw amino-acid sequence, 230 residues long: Cytochrome c oxidase subunit 2 (230 aa).

Residues 1–14 (MAHPAQLGFQDAAS) are Mitochondrial intermembrane-facing. A helical membrane pass occupies residues 15 to 45 (PVMEELLCFHDHALMIVFLISTLVLYIIIAM). The Mitochondrial matrix segment spans residues 46–59 (VSTKLTNKFILDSQ). The chain crosses the membrane as a helical span at residues 60–87 (EIEIVWTVLPAIILILIALPSLRILYLM). Residues 88-230 (DEINDPHVTI…NWSSAMLEDA (143 aa)) lie on the Mitochondrial intermembrane side of the membrane. His161, Cys196, Glu198, Cys200, His204, and Met207 together coordinate Cu cation. Position 198 (Glu198) interacts with Mg(2+).

This sequence belongs to the cytochrome c oxidase subunit 2 family. Component of the cytochrome c oxidase (complex IV, CIV), a multisubunit enzyme composed of 14 subunits. The complex is composed of a catalytic core of 3 subunits MT-CO1, MT-CO2 and MT-CO3, encoded in the mitochondrial DNA, and 11 supernumerary subunits COX4I, COX5A, COX5B, COX6A, COX6B, COX6C, COX7A, COX7B, COX7C, COX8 and NDUFA4, which are encoded in the nuclear genome. The complex exists as a monomer or a dimer and forms supercomplexes (SCs) in the inner mitochondrial membrane with NADH-ubiquinone oxidoreductase (complex I, CI) and ubiquinol-cytochrome c oxidoreductase (cytochrome b-c1 complex, complex III, CIII), resulting in different assemblies (supercomplex SCI(1)III(2)IV(1) and megacomplex MCI(2)III(2)IV(2)). Found in a complex with TMEM177, COA6, COX18, COX20, SCO1 and SCO2. Interacts with TMEM177 in a COX20-dependent manner. Interacts with COX20. Interacts with COX16. It depends on Cu cation as a cofactor.

It localises to the mitochondrion inner membrane. The catalysed reaction is 4 Fe(II)-[cytochrome c] + O2 + 8 H(+)(in) = 4 Fe(III)-[cytochrome c] + 2 H2O + 4 H(+)(out). Functionally, component of the cytochrome c oxidase, the last enzyme in the mitochondrial electron transport chain which drives oxidative phosphorylation. The respiratory chain contains 3 multisubunit complexes succinate dehydrogenase (complex II, CII), ubiquinol-cytochrome c oxidoreductase (cytochrome b-c1 complex, complex III, CIII) and cytochrome c oxidase (complex IV, CIV), that cooperate to transfer electrons derived from NADH and succinate to molecular oxygen, creating an electrochemical gradient over the inner membrane that drives transmembrane transport and the ATP synthase. Cytochrome c oxidase is the component of the respiratory chain that catalyzes the reduction of oxygen to water. Electrons originating from reduced cytochrome c in the intermembrane space (IMS) are transferred via the dinuclear copper A center (CU(A)) of subunit 2 and heme A of subunit 1 to the active site in subunit 1, a binuclear center (BNC) formed by heme A3 and copper B (CU(B)). The BNC reduces molecular oxygen to 2 water molecules using 4 electrons from cytochrome c in the IMS and 4 protons from the mitochondrial matrix. This chain is Cytochrome c oxidase subunit 2 (mt-co2), found in Danio rerio (Zebrafish).